An 871-amino-acid polypeptide reads, in one-letter code: Dual O-methyltransferase/FAD-dependent monooxygenase CTB3 (871 aa).

Positions 1 to 429 (MMQFQRDLEA…GLLTVRSAGQ (429 aa)) are O-methyltransferase. Asp-279 lines the S-adenosyl-L-methionine pocket. His-331 functions as the Proton acceptor in the catalytic mechanism. The tract at residues 430 to 871 (TALSGTNTLT…NLVDCSEFVF (442 aa)) is FAD-dependent monooxygenase. FAD contacts are provided by Glu-485, Arg-569, Asp-793, and Ala-806.

The protein in the C-terminal section; belongs to the paxM FAD-dependent monooxygenase family. It in the N-terminal section; belongs to the class I-like SAM-binding methyltransferase superfamily. Cation-independent O-methyltransferase family. COMT subfamily.

It catalyses the reaction nor-toralactone + S-adenosyl-L-methionine = toralactone + S-adenosyl-L-homocysteine + H(+). The catalysed reaction is toralactone + NADH + O2 + H(+) = 1-(3,4,5-trihydroxy-7-methoxynaphthalen-2-yl)propan-2-one + CO2 + NAD(+). It functions in the pathway mycotoxin biosynthesis. In terms of biological role, dual O-methyltransferase/FAD-dependent monooxygenase; part of the gene cluster that mediates the biosynthesis of cercosporin, a light-activated, non-host-selective toxin. The perylenequinone chromophore of cercosporin absorbs light energy to attain an electronically-activated triplet state and produces active oxygen species such as the hydroxyl radical, superoxide, hydrogen peroxide or singlet oxygen upon reaction with oxygen molecules. These reactive oxygen species cause damage to various cellular components including lipids, proteins and nucleic acids. The first step of cercosporin biosynthesis is performed by the polyketide synthase CTB1 which catalyzes the formation of nor-toralactone. The starter unit acyltransferase (SAT) domain of CTB1 initiates polyketide extension by the selective utilization of acetyl-CoA, which is elongated to the heptaketide in the beta-ketoacyl synthase (KS) domain by successive condensations with six malonyl units introduced by the malonyl acyltransferase (MAT) domain. The product template (PT) domain catalyzes C4-C9 and C2-C11 aldol cyclizations and dehydrations to a trihydroxynaphthalene, which is thought to be delivered to the thioesterase (TE) domain for product release. The bifunctional enzyme CTB3 then methylates nor-toralactone to toralactone before conducting an unusual oxidative aromatic ring opening. The O-methyltransferase CTB2 further methylates the nascent OH-6 of the CBT3 product, blocking further oxidation at this site before the reductase CTB6 reduces the 2-oxopropyl ketone at position C7, giving naphthalene. The FAD-dependent monooxygenase CTB5 in concert with the multicopper oxidase CTB12 are responsible for homodimerization of naphthalene with CTB7 installing the dioxepine moiety, finally producing cercosporin. The fasciclin domain-containing protein CTB11 might act with CTB5 and CTB12 whereas the roles of CTB9 and CTB10 have still to be elucidated. This Cercospora beticola (Sugarbeet leaf spot fungus) protein is Dual O-methyltransferase/FAD-dependent monooxygenase CTB3.